The chain runs to 563 residues: Germacrene-A synthase (563 aa).

5 residues coordinate Mg(2+): D316, D320, D460, T464, and E468. The short motif at 316 to 320 is the DDXXD motif element; it reads DDTYD.

This sequence belongs to the terpene synthase family. Tpsa subfamily. Mg(2+) is required as a cofactor. It depends on Mn(2+) as a cofactor. As to expression, high expression in disk florets, moderate expression in ray florets and detected in leaves and stems, but not in roots.

The enzyme catalyses (2E,6E)-farnesyl diphosphate = (+)-(R)-germacrene A + diphosphate. Its pathway is secondary metabolite biosynthesis; terpenoid biosynthesis. In terms of biological role, sesquiterpene synthase involved in germacrene A biosynthesis. May be involved in the biosynthesis of the sesquiterpene lactone matricine, one of the major active compounds of chamomile flowers. This is Germacrene-A synthase from Matricaria chamomilla var. recutita (German chamomile).